Reading from the N-terminus, the 340-residue chain is Lysophospholipase L2 (340 aa).

The protein localises to the cell inner membrane. The catalysed reaction is a 1-acyl-sn-glycero-3-phosphocholine + H2O = sn-glycerol 3-phosphocholine + a fatty acid + H(+). The sequence is that of Lysophospholipase L2 (pldB) from Escherichia coli O6:H1 (strain CFT073 / ATCC 700928 / UPEC).